A 381-amino-acid polypeptide reads, in one-letter code: 8-amino-7-oxononanoate synthase (381 aa).

Arg-27 serves as a coordination point for substrate. 105–106 (GY) provides a ligand contact to pyridoxal 5'-phosphate. A substrate-binding site is contributed by His-130. Pyridoxal 5'-phosphate is bound by residues Ser-176, 201 to 204 (DEAH), and 232 to 235 (TLSK). Lys-235 is subject to N6-(pyridoxal phosphate)lysine. A substrate-binding site is contributed by Thr-345.

Belongs to the class-II pyridoxal-phosphate-dependent aminotransferase family. BioF subfamily. Homodimer. Pyridoxal 5'-phosphate serves as cofactor.

The enzyme catalyses 6-carboxyhexanoyl-[ACP] + L-alanine + H(+) = (8S)-8-amino-7-oxononanoate + holo-[ACP] + CO2. Its pathway is cofactor biosynthesis; biotin biosynthesis. Functionally, catalyzes the decarboxylative condensation of pimeloyl-[acyl-carrier protein] and L-alanine to produce 8-amino-7-oxononanoate (AON), [acyl-carrier protein], and carbon dioxide. The protein is 8-amino-7-oxononanoate synthase of Mycobacterium avium (strain 104).